We begin with the raw amino-acid sequence, 390 residues long: 3,5-dihydroxybiphenyl synthase (390 aa).

C161 is an active-site residue.

It belongs to the thiolase-like superfamily. Chalcone/stilbene synthases family. As to quaternary structure, homodimer.

The catalysed reaction is benzoyl-CoA + 3 malonyl-CoA + 3 H(+) = biphenyl-3,5-diol + 4 CO2 + 4 CoA. Its function is as follows. Type III polyketide synthase involved in the biosynthesis of the phytoalexins bisphenyls and dibenzofurans. Can also use salicoyl-CoA and malonyl-CoA to produce a diketide intermediate yielding 4-hydroxycoumarin after cyclization and enolization. Can also use m-hydroxybenzoyl-CoA as substrate, producing m-hydroxybenzoyl diacetic acid lactone as a derailment product. No activity with p-hydroxybenzoyl-CoA, CoA-linked cinnamic acids or acetyl-CoA. The sequence is that of 3,5-dihydroxybiphenyl synthase (BIS1) from Sorbus aucuparia (European mountain ash).